Consider the following 295-residue polypeptide: Ethanolamine ammonia-lyase small subunit (295 aa).

3 residues coordinate adenosylcob(III)alamin: Val-207, Glu-228, and Cys-258.

This sequence belongs to the EutC family. As to quaternary structure, the basic unit is a heterodimer which dimerizes to form tetramers. The heterotetramers trimerize; 6 large subunits form a core ring with 6 small subunits projecting outwards. Adenosylcob(III)alamin serves as cofactor.

The protein resides in the bacterial microcompartment. It catalyses the reaction ethanolamine = acetaldehyde + NH4(+). The protein operates within amine and polyamine degradation; ethanolamine degradation. Functionally, catalyzes the deamination of various vicinal amino-alcohols to oxo compounds. Allows this organism to utilize ethanolamine as the sole source of nitrogen and carbon in the presence of external vitamin B12. The polypeptide is Ethanolamine ammonia-lyase small subunit (Escherichia coli O7:K1 (strain IAI39 / ExPEC)).